We begin with the raw amino-acid sequence, 269 residues long: uncharacterized protein (269 aa).

It to T.pallidum TP0678.

This is an uncharacterized protein from Borreliella burgdorferi (strain ATCC 35210 / DSM 4680 / CIP 102532 / B31) (Borrelia burgdorferi).